A 278-amino-acid chain; its full sequence is tRNA pseudouridine synthase A (278 aa).

Catalysis depends on Asp-52, which acts as the Nucleophile. A substrate-binding site is contributed by Tyr-111. Low complexity predominate over residues 253–264 (AKAGPLEAAPLG). The segment at 253 to 278 (AKAGPLEAAPLGEAPLKEATLKEDWR) is disordered. Over residues 267 to 278 (PLKEATLKEDWR) the composition is skewed to basic and acidic residues.

This sequence belongs to the tRNA pseudouridine synthase TruA family. In terms of assembly, homodimer.

The catalysed reaction is uridine(38/39/40) in tRNA = pseudouridine(38/39/40) in tRNA. Formation of pseudouridine at positions 38, 39 and 40 in the anticodon stem and loop of transfer RNAs. The chain is tRNA pseudouridine synthase A from Rhodospirillum rubrum (strain ATCC 11170 / ATH 1.1.1 / DSM 467 / LMG 4362 / NCIMB 8255 / S1).